Reading from the N-terminus, the 324-residue chain is NADH-ubiquinone oxidoreductase chain 1 (324 aa).

Helical transmembrane passes span 9–29, 75–95, 106–126, 146–166, 177–197, 228–248, 259–279, and 299–319; these read LINP…LTLI, FLFL…WAPM, LGIL…LGSG, ISYE…SGGY, SIWL…STLA, LFFL…AVLF, ELTT…FLWV, and FLPL…ALAG.

The protein belongs to the complex I subunit 1 family.

The protein localises to the mitochondrion inner membrane. The catalysed reaction is a ubiquinone + NADH + 5 H(+)(in) = a ubiquinol + NAD(+) + 4 H(+)(out). Core subunit of the mitochondrial membrane respiratory chain NADH dehydrogenase (Complex I) that is believed to belong to the minimal assembly required for catalysis. Complex I functions in the transfer of electrons from NADH to the respiratory chain. The immediate electron acceptor for the enzyme is believed to be ubiquinone. This Carassius auratus (Goldfish) protein is NADH-ubiquinone oxidoreductase chain 1 (MT-ND1).